A 73-amino-acid chain; its full sequence is Gas vesicle protein M2 (73 aa).

Belongs to the gas vesicle GvpA family. In terms of assembly, gvpF to GvpM interact with each other in vitro, and may form multi-subunit complex(es). Might interact with GvpA.

Its subcellular location is the gas vesicle. Functionally, proteins GvpF to GvpM might be involved in nucleating gas vesicle formation. A minor component of the gas vesicle. Gas vesicles are hollow, gas filled proteinaceous nanostructures found in several microbial planktonic microorganisms. They allow positioning of halobacteria at the optimal depth for growth in the poorly aerated, shallow brine pools of their habitat. Expression of 2 c-vac DNA fragments containing 2 divergently transcribed regions (gvpE-gvpF-gvpG-gvpH-gvpI-gvpJ-gvpK-gvpL-gvpM and gvpA-gvpC-gvpN-gvpO) allows H.volcanii to produce gas vesicles. The protein is Gas vesicle protein M2 of Halobacterium salinarum (strain ATCC 700922 / JCM 11081 / NRC-1) (Halobacterium halobium).